Reading from the N-terminus, the 116-residue chain is Protein SPIRAL1-like 1 (116 aa).

Residues 1–12 (MSRGGSAGGGQS) are compositionally biased toward gly residues. The segment at 1–116 (MSRGGSAGGG…SSLGYLFGGN (116 aa)) is disordered. Residues 27 to 43 (AAKPAPAAAPAPAPAPA) show a composition bias toward pro residues. Residues 44–60 (PAAAVAAPAEKPSPAKA) are compositionally biased toward low complexity. The segment covering 72-90 (GSRSNNNYHRADGQNTGNF) has biased composition (polar residues). Residues 103 to 116 (PGGGSSLGYLFGGN) show a composition bias toward gly residues.

It belongs to the SPIRAL1 family.

Functionally, acts in maintaining the cortical microtubules organization essential for anisotropic cell growth. The sequence is that of Protein SPIRAL1-like 1 from Oryza sativa subsp. japonica (Rice).